The chain runs to 272 residues: MLLAIDVRNTHTVVGLLSGMKEHAKVVQQWRIRTESEVTADELALTIDGLIGEDSERLTGTAALSTVPSVLHEVRIMLDQYWPSVPHVLIEPGVRTGIPLLVDNPKEVGADRIVNCLAAYDRFRKAAIVVDFGSSICVDVVSAKGEFLGGAIAPGVQVSSDAAAARSAALRRVELARPRSVVGKNTVECMQAGAVFGFAGLVDGLVGRIREDVSGFSVDHDVAIVATGHTAPLLLPELHTVDHYDQHLTLQGLRLVFERNLEVQRGRLKTAR.

Position 6–13 (6–13 (DVRNTHTV)) interacts with ATP. Position 109–112 (109–112 (GADR)) interacts with substrate. Asp111 serves as the catalytic Proton acceptor. Asp131 contacts K(+). Ser134 serves as a coordination point for ATP. Thr186 lines the substrate pocket.

Belongs to the type III pantothenate kinase family. In terms of assembly, homodimer. NH4(+) serves as cofactor. It depends on K(+) as a cofactor.

Its subcellular location is the cytoplasm. The catalysed reaction is (R)-pantothenate + ATP = (R)-4'-phosphopantothenate + ADP + H(+). Its pathway is cofactor biosynthesis; coenzyme A biosynthesis; CoA from (R)-pantothenate: step 1/5. In terms of biological role, catalyzes the phosphorylation of pantothenate (Pan), the first step in CoA biosynthesis. The sequence is that of Type III pantothenate kinase from Mycobacterium bovis (strain BCG / Pasteur 1173P2).